The sequence spans 1520 residues: Glutamate synthase [NADPH] large chain (1520 aa).

C22 functions as the For GATase activity in the catalytic mechanism. The Glutamine amidotransferase type-2 domain occupies 22–415 (CGIGLYAHLK…PGKMLLIDLE (394 aa)). The segment at 890-913 (GGKSNSGEGGEDPKRFVPDENGDD) is disordered. The span at 900-913 (EDPKRFVPDENGDD) shows a compositional bias: basic and acidic residues. Position 1060–1112 (1060–1112 (LAEAHQTLMLNGLRDRVVLETDGKLMTGRDVVMAALLGAEEFGFATAPLVVLG)) interacts with FMN. [3Fe-4S] cluster contacts are provided by C1113, C1119, and C1124.

This sequence belongs to the glutamate synthase family. Aggregate of 4 catalytic active heterodimers, consisting of a large and a small subunit. It depends on [3Fe-4S] cluster as a cofactor. Requires FAD as cofactor. The cofactor is FMN.

The catalysed reaction is 2 L-glutamate + NADP(+) = L-glutamine + 2-oxoglutarate + NADPH + H(+). It participates in amino-acid biosynthesis; L-glutamate biosynthesis via GLT pathway; L-glutamate from 2-oxoglutarate and L-glutamine (NADP(+) route): step 1/1. It functions in the pathway energy metabolism; nitrogen metabolism. The chain is Glutamate synthase [NADPH] large chain (gltA) from Bacillus subtilis (strain 168).